We begin with the raw amino-acid sequence, 89 residues long: Ribonuclease P protein component 1 (89 aa).

Belongs to the eukaryotic/archaeal RNase P protein component 1 family. As to quaternary structure, consists of a catalytic RNA component and at least 4-5 protein subunits.

The protein resides in the cytoplasm. It catalyses the reaction Endonucleolytic cleavage of RNA, removing 5'-extranucleotides from tRNA precursor.. Functionally, part of ribonuclease P, a protein complex that generates mature tRNA molecules by cleaving their 5'-ends. The polypeptide is Ribonuclease P protein component 1 (Thermoplasma volcanium (strain ATCC 51530 / DSM 4299 / JCM 9571 / NBRC 15438 / GSS1)).